A 123-amino-acid polypeptide reads, in one-letter code: Dormancy-associated protein homolog 4 (123 aa).

Residues 7–86 (LWDETVAGPT…NPGTPLTPGT (80 aa)) form a disordered region. Positions 30-46 (LSTVRSSPPSLSSDQVT) are enriched in low complexity. Polar residues-rich tracts occupy residues 47–58 (RSIMVTKGNNNV) and 71–80 (PTCSSSNPGT). Serine 74 bears the Phosphoserine mark.

The protein belongs to the DRM1/ARP family.

This is Dormancy-associated protein homolog 4 from Arabidopsis thaliana (Mouse-ear cress).